The primary structure comprises 631 residues: Chaperone protein HtpG (631 aa).

The a; substrate-binding stretch occupies residues 1-339; it reads MSTNQETRGF…SNDLPLNVSR (339 aa). Residues 340–555 are b; sequence EILQDNKVTS…DDQMTTQMAK (216 aa). The c stretch occupies residues 556-631; that stretch reads LFAAAGQAMP…NTLLSKLTSH (76 aa).

It belongs to the heat shock protein 90 family. Homodimer.

It localises to the cytoplasm. In terms of biological role, molecular chaperone. Has ATPase activity. In Pasteurella multocida (strain Pm70), this protein is Chaperone protein HtpG.